Consider the following 287-residue polypeptide: Uricase (287 aa).

Catalysis depends on charge relay system residues Lys-11 and Thr-58. The urate site is built by Thr-58, Asp-59, Phe-160, Arg-177, Val-219, Gln-220, and Asn-246. The Charge relay system role is filled by His-248. The short motif at 285-287 is the Microbody targeting signal element; sequence SRL.

The protein belongs to the uricase family.

It localises to the peroxisome. The catalysed reaction is urate + O2 + H2O = 5-hydroxyisourate + H2O2. It participates in purine metabolism; urate degradation; (S)-allantoin from urate: step 1/3. Catalyzes the oxidation of uric acid to 5-hydroxyisourate, which is further processed to form (S)-allantoin. The polypeptide is Uricase (uox) (Dictyostelium discoideum (Social amoeba)).